The following is a 471-amino-acid chain: ATP synthase subunit beta (471 aa).

Gly153 to Thr160 is a binding site for ATP.

It belongs to the ATPase alpha/beta chains family. As to quaternary structure, F-type ATPases have 2 components, CF(1) - the catalytic core - and CF(0) - the membrane proton channel. CF(1) has five subunits: alpha(3), beta(3), gamma(1), delta(1), epsilon(1). CF(0) has four main subunits: a(1), b(1), b'(1) and c(9-12).

The protein resides in the cell inner membrane. It carries out the reaction ATP + H2O + 4 H(+)(in) = ADP + phosphate + 5 H(+)(out). Its function is as follows. Produces ATP from ADP in the presence of a proton gradient across the membrane. The catalytic sites are hosted primarily by the beta subunits. In Methylibium petroleiphilum (strain ATCC BAA-1232 / LMG 22953 / PM1), this protein is ATP synthase subunit beta.